A 466-amino-acid polypeptide reads, in one-letter code: Ribosomal protein uS12 methylthiotransferase RimO (466 aa).

Residues 15–125 (PKVGFVSLGC…VMEAVHAALP (111 aa)) form the MTTase N-terminal domain. Residues cysteine 24, cysteine 60, cysteine 89, cysteine 156, cysteine 160, and cysteine 163 each coordinate [4Fe-4S] cluster. One can recognise a Radical SAM core domain in the interval 142 to 380 (LTPRHYAYLK…AKQAEISALR (239 aa)). Residues 382 to 450 (EAKIGSVQQC…EHDLFGDALP (69 aa)) enclose the TRAM domain.

Belongs to the methylthiotransferase family. RimO subfamily. Requires [4Fe-4S] cluster as cofactor.

The protein localises to the cytoplasm. It catalyses the reaction L-aspartate(89)-[ribosomal protein uS12]-hydrogen + (sulfur carrier)-SH + AH2 + 2 S-adenosyl-L-methionine = 3-methylsulfanyl-L-aspartate(89)-[ribosomal protein uS12]-hydrogen + (sulfur carrier)-H + 5'-deoxyadenosine + L-methionine + A + S-adenosyl-L-homocysteine + 2 H(+). Its function is as follows. Catalyzes the methylthiolation of an aspartic acid residue of ribosomal protein uS12. In Xanthomonas oryzae pv. oryzae (strain MAFF 311018), this protein is Ribosomal protein uS12 methylthiotransferase RimO.